The following is a 1064-amino-acid chain: Error-prone DNA polymerase (1064 aa).

The protein belongs to the DNA polymerase type-C family. DnaE2 subfamily.

The protein resides in the cytoplasm. It carries out the reaction DNA(n) + a 2'-deoxyribonucleoside 5'-triphosphate = DNA(n+1) + diphosphate. Its function is as follows. DNA polymerase involved in damage-induced mutagenesis and translesion synthesis (TLS). It is not the major replicative DNA polymerase. The polypeptide is Error-prone DNA polymerase (Azoarcus sp. (strain BH72)).